Reading from the N-terminus, the 504-residue chain is 2,3-bisphosphoglycerate-independent phosphoglycerate mutase (504 aa).

D13 and S63 together coordinate Mn(2+). S63 acts as the Phosphoserine intermediate in catalysis. Residues H124, 153–154 (RD), R183, R189, 254–257 (RADR), and K330 each bind substrate. Residues D397, H401, D438, H439, and H457 each coordinate Mn(2+).

Belongs to the BPG-independent phosphoglycerate mutase family. Monomer. The cofactor is Mn(2+).

The catalysed reaction is (2R)-2-phosphoglycerate = (2R)-3-phosphoglycerate. It participates in carbohydrate degradation; glycolysis; pyruvate from D-glyceraldehyde 3-phosphate: step 3/5. Catalyzes the interconversion of 2-phosphoglycerate and 3-phosphoglycerate. This Rhodopseudomonas palustris (strain ATCC BAA-98 / CGA009) protein is 2,3-bisphosphoglycerate-independent phosphoglycerate mutase.